A 43-amino-acid chain; its full sequence is Thymosin beta-b (43 aa).

Composition is skewed to basic and acidic residues over residues 1 to 25 (MADK…ETQE) and 33 to 43 (ETIEQEKQCEA). The interval 1–43 (MADKPDISEVSQFDKTKLKKTETQEKNTLPTKETIEQEKQCEA) is disordered.

This sequence belongs to the thymosin beta family.

Its subcellular location is the cytoplasm. It localises to the cytoskeleton. Plays an important role in the organization of the cytoskeleton. Binds to and sequesters actin monomers (G actin) and therefore inhibits actin polymerization. This Cyprinus carpio (Common carp) protein is Thymosin beta-b.